We begin with the raw amino-acid sequence, 785 residues long: Ubiquitin carboxyl-terminal hydrolase 1 (785 aa).

Disordered regions lie at residues 1 to 21 (MPGV…SKKN) and 33 to 52 (TKRA…ASEY). Polar residues predominate over residues 7–16 (SESNGLSRGS). S16, S42, and S67 each carry phosphoserine. The USP domain occupies 81-785 (VGLNNLGNTC…TPYLLFYKKL (705 aa)). C90 acts as the Nucleophile in catalysis. Composition is skewed to basic and acidic residues over residues 258–275 (EDFK…KSDT) and 286–298 (LSKE…ENQR). The disordered stretch occupies residues 258 to 336 (EDFKEKLPKG…SPRPSQKKSR (79 aa)). S313 and S475 each carry phosphoserine. H593 serves as the catalytic Proton acceptor. The disordered stretch occupies residues 693–723 (TAFAENRNSETSDTTGTHESDRNKESSDQTG). Positions 708–719 (GTHESDRNKESS) are enriched in basic and acidic residues. S768 carries the post-translational modification Phosphoserine.

Belongs to the peptidase C19 family. As to quaternary structure, interacts with FANCD2 and PCNA. Interacts with WDR48. Interacts with ATAD5; the interaction regulates USP1-mediated PCNA deubiquitination. In terms of processing, autocatalytic cleavage of USP1 following UV irradiation inactivates it, leading to an increase in ubiquitinated PCNA, recruitment of POLH and translesion synthesis. Post-translationally, ubiquitinated by the CRL2(KLHDC2) complex following autocatalytic cleavage, leading to its degradation: the CRL2(KLHDC2) complex recognizes the diglycine (Gly-Gly) at the C-terminus.

The protein resides in the nucleus. It catalyses the reaction Thiol-dependent hydrolysis of ester, thioester, amide, peptide and isopeptide bonds formed by the C-terminal Gly of ubiquitin (a 76-residue protein attached to proteins as an intracellular targeting signal).. Functionally, negative regulator of DNA damage repair which specifically deubiquitinates monoubiquitinated FANCD2. Also involved in PCNA-mediated translesion synthesis (TLS) by deubiquitinating monoubiquitinated PCNA. Has almost no deubiquitinating activity by itself and requires the interaction with WDR48 to have a high activity. The polypeptide is Ubiquitin carboxyl-terminal hydrolase 1 (USP1) (Homo sapiens (Human)).